We begin with the raw amino-acid sequence, 166 residues long: MFPMVTEFMNYGQQTVRAARYIGQGFTITLSHANRLPVTIQYPYEKLITSERFRGRIHFEFDKCIACEVCVRVCPIDLPVVDWKLETDIRKKRLLNYSIDFGICIFCGNCVEYCPTNCLSMTEEYELSTYDRHELNYNQIALGRLPMSIIDDYTIRTILNLPETKT.

4Fe-4S ferredoxin-type domains are found at residues 55–84 (GRIH…VDWK) and 95–124 (LNYS…MTEE). Positions 64, 67, 70, 74, 104, 107, 110, and 114 each coordinate [4Fe-4S] cluster.

It belongs to the complex I 23 kDa subunit family. NDH is composed of at least 16 different subunits, 5 of which are encoded in the nucleus. Requires [4Fe-4S] cluster as cofactor.

Its subcellular location is the plastid. The protein resides in the chloroplast thylakoid membrane. It carries out the reaction a plastoquinone + NADH + (n+1) H(+)(in) = a plastoquinol + NAD(+) + n H(+)(out). The catalysed reaction is a plastoquinone + NADPH + (n+1) H(+)(in) = a plastoquinol + NADP(+) + n H(+)(out). In terms of biological role, NDH shuttles electrons from NAD(P)H:plastoquinone, via FMN and iron-sulfur (Fe-S) centers, to quinones in the photosynthetic chain and possibly in a chloroplast respiratory chain. The immediate electron acceptor for the enzyme in this species is believed to be plastoquinone. Couples the redox reaction to proton translocation, and thus conserves the redox energy in a proton gradient. The protein is NAD(P)H-quinone oxidoreductase subunit I, chloroplastic of Acanthospermum australe (Paraguayan starburr).